The following is a 201-amino-acid chain: Holliday junction branch migration complex subunit RuvA (201 aa).

The interval 1-64 is domain I; it reads MFNSISGILS…EDQMRLFGFP (64 aa). Positions 65–140 are domain II; sequence NQAERSLFLD…KLTNLNEVSS (76 aa). Positions 140–144 are flexible linker; it reads SKGQA. Residues 145 to 201 form a domain III region; the sequence is SVSCEYEDIVTALTEMGFERKSVIVQVEKIAEEMKAAGSDPLKNEEELFRRSIVALS.

Belongs to the RuvA family. As to quaternary structure, homotetramer. Forms an RuvA(8)-RuvB(12)-Holliday junction (HJ) complex. HJ DNA is sandwiched between 2 RuvA tetramers; dsDNA enters through RuvA and exits via RuvB. An RuvB hexamer assembles on each DNA strand where it exits the tetramer. Each RuvB hexamer is contacted by two RuvA subunits (via domain III) on 2 adjacent RuvB subunits; this complex drives branch migration. In the full resolvosome a probable DNA-RuvA(4)-RuvB(12)-RuvC(2) complex forms which resolves the HJ.

The protein resides in the cytoplasm. Functionally, the RuvA-RuvB-RuvC complex processes Holliday junction (HJ) DNA during genetic recombination and DNA repair, while the RuvA-RuvB complex plays an important role in the rescue of blocked DNA replication forks via replication fork reversal (RFR). RuvA specifically binds to HJ cruciform DNA, conferring on it an open structure. The RuvB hexamer acts as an ATP-dependent pump, pulling dsDNA into and through the RuvAB complex. HJ branch migration allows RuvC to scan DNA until it finds its consensus sequence, where it cleaves and resolves the cruciform DNA. The polypeptide is Holliday junction branch migration complex subunit RuvA (Treponema denticola (strain ATCC 35405 / DSM 14222 / CIP 103919 / JCM 8153 / KCTC 15104)).